A 70-amino-acid polypeptide reads, in one-letter code: ATP synthase subunit c (70 aa).

2 consecutive transmembrane segments (helical) span residues 4–24 and 47–67; these read IAAG…NGLV and FIGV…ALMV.

Belongs to the ATPase C chain family. In terms of assembly, F-type ATPases have 2 components, F(1) - the catalytic core - and F(0) - the membrane proton channel. F(1) has five subunits: alpha(3), beta(3), gamma(1), delta(1), epsilon(1). F(0) has three main subunits: a(1), b(2) and c(10-14). The alpha and beta chains form an alternating ring which encloses part of the gamma chain. F(1) is attached to F(0) by a central stalk formed by the gamma and epsilon chains, while a peripheral stalk is formed by the delta and b chains.

The protein localises to the cell membrane. In terms of biological role, f(1)F(0) ATP synthase produces ATP from ADP in the presence of a proton or sodium gradient. F-type ATPases consist of two structural domains, F(1) containing the extramembraneous catalytic core and F(0) containing the membrane proton channel, linked together by a central stalk and a peripheral stalk. During catalysis, ATP synthesis in the catalytic domain of F(1) is coupled via a rotary mechanism of the central stalk subunits to proton translocation. Functionally, key component of the F(0) channel; it plays a direct role in translocation across the membrane. A homomeric c-ring of between 10-14 subunits forms the central stalk rotor element with the F(1) delta and epsilon subunits. This chain is ATP synthase subunit c, found in Lactiplantibacillus plantarum (strain ATCC BAA-793 / NCIMB 8826 / WCFS1) (Lactobacillus plantarum).